A 524-amino-acid chain; its full sequence is Probable inorganic phosphate transporter 1-2 (524 aa).

Topologically, residues 1-24 are cytoplasmic; it reads MAEQQLGVLKALDVAKTQLYHFTA. Residues 25 to 45 traverse the membrane as a helical segment; sequence IVIAGMGFFTDAYDLFCVSLV. Residues 46 to 70 are Extracellular-facing; that stretch reads TKLLGRIYYFNPESAKPGSLPPHVA. Residues 71–91 traverse the membrane as a helical segment; sequence AAVNGVALCGTLSGQLFFGWL. The Cytoplasmic segment spans residues 92-99; that stretch reads GDKLGRKK. Residues 100 to 120 form a helical membrane-spanning segment; that stretch reads VYGLTLIMMILCSVASGLSFG. Over 121 to 131 the chain is Extracellular; sequence NEAKGVMTTLC. A helical transmembrane segment spans residues 132–152; it reads FFRFWLGFGIGGDYPLSATIM. Over 153 to 161 the chain is Cytoplasmic; it reads SEYANKKTR. A helical membrane pass occupies residues 162-182; it reads GAFIAAVFAMQGVGILAGGFV. Over 183 to 211 the chain is Extracellular; that stretch reads ALAVSSIFDKKFPAPTYAVNRALSTPPQV. A helical membrane pass occupies residues 212–232; that stretch reads DYIWRIIVMFGALPAALTYYW. The Cytoplasmic segment spans residues 233–292; the sequence is RMKMPETARYTALVAKNIKQATADMSKVLQTDIELEERVEDDVKDPRQNYGLFSKEFLRR. Residues 293–313 form a helical membrane-spanning segment; the sequence is HGLHLLGTTSTWFLLDIAFYS. The Extracellular portion of the chain corresponds to 314–348; that stretch reads QNLFQKDIFSAIGWIPKAATMNATHEVFRIARAQT. Residues 349-369 form a helical membrane-spanning segment; sequence LIALCSTVPGYWFTVAFIDTI. Residues 370–371 are Cytoplasmic-facing; it reads GR. The helical transmembrane segment at 372–392 threads the bilayer; the sequence is FKIQLNGFFMMTVFMFAIAFP. Residues 393–402 lie on the Extracellular side of the membrane; sequence YNHWIKPENR. The chain crosses the membrane as a helical span at residues 403-423; sequence IGFVVMYSLTFFFANFGPNAT. The Cytoplasmic segment spans residues 424 to 441; the sequence is TFIVPAEIFPARLRSTCH. Residues 442 to 462 form a helical membrane-spanning segment; that stretch reads GISAAAGKAGAIIGAFGFLYA. At 463-484 the chain is on the extracellular side; it reads AQNQDKAKVDAGYPPGIGVKNS. The helical transmembrane segment at 485-505 threads the bilayer; the sequence is LIVLGVLNFIGMLFTFLVPEP. At 506–524 the chain is on the cytoplasmic side; that stretch reads KGKSLEELSGEAEVSHDEK.

It belongs to the major facilitator superfamily. Phosphate:H(+) symporter (TC 2.A.1.9) family. Root specific, especially in trichoblasts. In mature plants, localized in root cortical cells and young lateral roots.

The protein localises to the membrane. In terms of biological role, high-affinity transporter for external inorganic phosphate. The sequence is that of Probable inorganic phosphate transporter 1-2 (PHT1-2) from Arabidopsis thaliana (Mouse-ear cress).